Reading from the N-terminus, the 335-residue chain is Probable UDP-N-acetylglucosamine pyrophosphorylase (335 aa).

A Substrate binding motif is present at residues Leu-45–Gly-48. UTP is bound by residues Leu-45–Gly-48, Lys-59, Gln-120, and Gly-145. Residue Asn-146 participates in substrate binding. Asp-170 contacts UTP. The Substrate binding motif lies at Glu-218–Tyr-219. Lys-278 provides a ligand contact to UTP. Lys-308 contributes to the substrate binding site.

It belongs to the UDPGP type 1 family.

Its subcellular location is the cytoplasm. It carries out the reaction N-acetyl-alpha-D-glucosamine 1-phosphate + UTP + H(+) = UDP-N-acetyl-alpha-D-glucosamine + diphosphate. The protein operates within nucleotide-sugar biosynthesis; UDP-N-acetyl-alpha-D-glucosamine biosynthesis; UDP-N-acetyl-alpha-D-glucosamine from N-acetyl-alpha-D-glucosamine 1-phosphate: step 1/1. In Encephalitozoon cuniculi (strain GB-M1) (Microsporidian parasite), this protein is Probable UDP-N-acetylglucosamine pyrophosphorylase (UAP1).